Consider the following 285-residue polypeptide: MHIIKTIKVLYREIKILKKSNKKIGLVPTMGNLHDGHIKLILLAKKYSDIIIVSIFINPMQFDNLSDLKNYPKTFMKDSIILKKYHVDILFFPHINEIYPNGIEHQTFVEVIKLSKILEGQSRPGHFRGVTTIITKLFNFIQPDFAFFGEKDYQQLLIIKILVKELNYMIKIISLPTIRLKNGLALSSRNNYLSSQENEIAPYLYKIIKKTCEKIIKEDDNIRPKIIHESKILLIKKGFSVDIFDIYDYKNLEHPSKKVKKVILLASVWLGNTRLIDNKKIILNY.

Residue 30–37 (MGNLHDGH) coordinates ATP. The Proton donor role is filled by histidine 37. Glutamine 61 lines the (R)-pantoate pocket. Glutamine 61 serves as a coordination point for beta-alanine. Position 149 to 152 (149 to 152 (GEKD)) interacts with ATP. Residue glutamine 155 coordinates (R)-pantoate. ATP is bound by residues isoleucine 178 and 186–189 (LSSR).

This sequence belongs to the pantothenate synthetase family. Homodimer.

The protein localises to the cytoplasm. The catalysed reaction is (R)-pantoate + beta-alanine + ATP = (R)-pantothenate + AMP + diphosphate + H(+). It participates in cofactor biosynthesis; (R)-pantothenate biosynthesis; (R)-pantothenate from (R)-pantoate and beta-alanine: step 1/1. Catalyzes the condensation of pantoate with beta-alanine in an ATP-dependent reaction via a pantoyl-adenylate intermediate. This chain is Pantothenate synthetase, found in Buchnera aphidicola subsp. Acyrthosiphon pisum (strain Tuc7).